The sequence spans 287 residues: uncharacterized protein (287 aa).

Residues 43–50, 90–93, and 156–159 contribute to the GTP site; these read GKTGVGKS, DLPG, and DKAE. In terms of domain architecture, G spans 48-138; the sequence is GKSSLCNALF…LTVDEHFYHQ (91 aa).

It to E.coli YfjP and YeeP.

This is an uncharacterized protein from Escherichia coli (strain K12).